The chain runs to 571 residues: Glutamate--tRNA ligase (571 aa).

Positions 106–116 match the 'HIGH' region motif; that stretch reads PNPDGAFHLGN.

It belongs to the class-I aminoacyl-tRNA synthetase family. Glutamate--tRNA ligase type 2 subfamily.

The protein resides in the cytoplasm. It catalyses the reaction tRNA(Glu) + L-glutamate + ATP = L-glutamyl-tRNA(Glu) + AMP + diphosphate. Functionally, catalyzes the attachment of glutamate to tRNA(Glu) in a two-step reaction: glutamate is first activated by ATP to form Glu-AMP and then transferred to the acceptor end of tRNA(Glu). The protein is Glutamate--tRNA ligase of Pyrococcus abyssi (strain GE5 / Orsay).